A 793-amino-acid chain; its full sequence is Short transient receptor potential channel 1 (793 aa).

Residues 1–30 are disordered; the sequence is MMAALYPSTDLSGVSSSSLPSSPSSSSPNE. At 1 to 345 the chain is on the cytoplasmic side; the sequence is MMAALYPSTD…FGQMSGYRRK (345 aa). Over residues 15 to 28 the composition is skewed to low complexity; it reads SSSSLPSSPSSSSP. ANK repeat units follow at residues 46–75, 83–109, 111–156, and 158–180; these read LNEK…SGDL, LGRN…YGCQ, ADAL…EYST, and MDVA…MLLK. 4 residues coordinate Zn(2+): His-189, Cys-193, Cys-195, and Cys-198. The discontinuously helical intramembrane region spans 346 to 379; the sequence is PTCKKIMTVLTVGIFWPVLSLCYLIAPKSQFGRI. Residues 380–386 lie on the Cytoplasmic side of the membrane; it reads IHTPFMK. The chain crosses the membrane as a helical span at residues 387 to 404; sequence FIIHGASYFTFLLLLNLY. The Extracellular segment spans residues 405–422; it reads SLVYNEDKKNTMGPALER. Residues 423-439 form a helical membrane-spanning segment; that stretch reads IDYLLILWIIGMIWSDI. At 440-455 the chain is on the cytoplasmic side; the sequence is KRLWYEGLEDFLEESR. A helical membrane pass occupies residues 456–475; the sequence is NQLSFVMNSLYLATFALKVV. The Extracellular segment spans residues 476–496; that stretch reads AHNKFHDFADRKDWDAFHPTL. Residues 497 to 517 form a helical membrane-spanning segment; it reads VAEGLFAFANVLSYLRLFFMY. Residues 518–536 are Cytoplasmic-facing; it reads TTSSILGPLQISMGQMLQD. Residues 537-558 form a helical membrane-spanning segment; it reads FGKFLGMFLLVLFSFTIGLTQL. Over 559–623 the chain is Extracellular; it reads YDKGYTSKEQ…GEELQSFVGA (65 aa). Cys-571 and Cys-576 are joined by a disulfide. The helical transmembrane segment at 624–644 threads the bilayer; that stretch reads VIVGTYNVVVVIVLTKLLVAM. Over 645–793 the chain is Cytoplasmic; sequence LHKSFQLIAN…SKYAMFYPRN (149 aa).

It belongs to the transient receptor (TC 1.A.4) family. STrpC subfamily. TRPC1 sub-subfamily. As to quaternary structure, heterotetramer with TRPC4 and/or TRPC5. Forms a heteromeric ion channel with TRPC4, with a 1:3 TRPC1:TRPC4 stoichiometry. Unlike other TRP channel proteins, does not form a homomeric channel. Interacts with TRPC4AP. Interacts with ITPR3. Interacts with MX1 and RNF24. Interacts with FKBP4. Interacts with PLSCR1. Interacts with PKD2L2. Forms a heterotetramer with PKD2 with a 2:2 stoichiometry; has distinct channel properties separate from PKD2 or TRPC1 homomers alone. In terms of processing, activation of PRKCA induces phosphorylation of TRPC1 and subsequent Ca2+ entry into cells.

The protein localises to the cell membrane. It catalyses the reaction Ca(2+)(in) = Ca(2+)(out). The catalysed reaction is Na(+)(in) = Na(+)(out). It carries out the reaction Li(+)(in) = Li(+)(out). The enzyme catalyses Cs(+)(in) = Cs(+)(out). With respect to regulation, may be operated by a phosphatidylinositol second messenger system activated by receptor tyrosine kinases or G-protein coupled receptors. Also activated by intracellular calcium store depletion. Forms a receptor-activated non-selective calcium permeant cation channel. Forms a heteromeric ion channel with TRPC4 or TRPC5 that has reduced calcium permeability compared to the homomeric TRPC4 or TRPC5 channel. Also permeable to monovalent ions including sodium, lithium and cesium ions. This is Short transient receptor potential channel 1 (Trpc1) from Mus musculus (Mouse).